The following is a 194-amino-acid chain: Anthranilate synthase component 2 (194 aa).

Positions 2–194 constitute a Glutamine amidotransferase type-1 domain; it reads KIFFIDNFDS…QSVGFLRELS (193 aa). 57 to 59 contributes to the L-glutamine binding site; the sequence is GPG. The active-site Nucleophile; for GATase activity is the Cys84. Residues Gln88 and 134-135 contribute to the L-glutamine site; that span reads SL. Catalysis depends on for GATase activity residues His170 and Glu172.

Heterotetramer consisting of two non-identical subunits: a beta subunit (TrpG) and a large alpha subunit (TrpE).

It carries out the reaction chorismate + L-glutamine = anthranilate + pyruvate + L-glutamate + H(+). It functions in the pathway amino-acid biosynthesis; L-tryptophan biosynthesis; L-tryptophan from chorismate: step 1/5. Functionally, part of a heterotetrameric complex that catalyzes the two-step biosynthesis of anthranilate, an intermediate in the biosynthesis of L-tryptophan. In the first step, the glutamine-binding beta subunit (TrpG) of anthranilate synthase (AS) provides the glutamine amidotransferase activity which generates ammonia as a substrate that, along with chorismate, is used in the second step, catalyzed by the large alpha subunit of AS (TrpE) to produce anthranilate. In the absence of TrpG, TrpE can synthesize anthranilate directly from chorismate and high concentrations of ammonia. The sequence is that of Anthranilate synthase component 2 (trpG) from Helicobacter pylori (strain J99 / ATCC 700824) (Campylobacter pylori J99).